Here is a 120-residue protein sequence, read N- to C-terminus: MVQRLTYRRRHSYATKSNQHRVVKTPGGKLVYQTTKKRASGPKCPVTGKRIQGIPHLRPTEYKRSRLSRNRRTVNRAYGGVLSGGAVRERIIRAFLVEEQKIVKKVLKIQKTKEKQAAKN.

Belongs to the eukaryotic ribosomal protein eL34 family.

The protein is Large ribosomal subunit protein eL34 (RPL34) of Pisum sativum (Garden pea).